Consider the following 264-residue polypeptide: MQFKKSSIVSFLSLLGSLTKAAAEVRLVTMDGVVYSYQVVTSTIKPATTYVETIYYTTTYVEAVTLTNHAVTSTTRESVVTSTLSSTSLLPETTEESTQEDEQTTDFTSTTDVESTTDVTSTTAETATLEPTTSDETYTTELTPTTSVKTTLENDDSTSVITTKSTSKANTQSISRKTSTLTPTVTSETTESTSAETLSSTDKSTSTSSSSVLEPMVTNTDCQVVYEYTDDDEYYSTVEISGTESVDAATTYTKTRTVYATISS.

Positions 1–23 are cleaved as a signal peptide; that stretch reads MQFKKSSIVSFLSLLGSLTKAAA. Positions 75 to 92 are enriched in low complexity; the sequence is TRESVVTSTLSSTSLLPE. A disordered region spans residues 75 to 213; it reads TRESVVTSTL…STSTSSSSVL (139 aa). Residues 93–104 are compositionally biased toward acidic residues; sequence TTEESTQEDEQT. Low complexity-rich tracts occupy residues 105 to 147, 157 to 168, and 178 to 211; these read TDFT…PTTS, STSVITTKSTSK, and TSTL…SSSS. Asp-247 carries the GPI-anchor amidated aspartate lipid modification. The propeptide at 248–264 is removed in mature form; sequence AATTYTKTRTVYATISS.

Its subcellular location is the secreted. The protein localises to the cell wall. It is found in the membrane. Involved in pseudohyphal growth, cell wall metabolism and required for the separation of the mother and daughter cells. This is Protein DSE2 (DSE2) from Kluyveromyces lactis (strain ATCC 8585 / CBS 2359 / DSM 70799 / NBRC 1267 / NRRL Y-1140 / WM37) (Yeast).